Consider the following 155-residue polypeptide: Small ribosomal subunit protein uS9 (155 aa).

The protein belongs to the universal ribosomal protein uS9 family.

This is Small ribosomal subunit protein uS9 from Rhizobium johnstonii (strain DSM 114642 / LMG 32736 / 3841) (Rhizobium leguminosarum bv. viciae).